Reading from the N-terminus, the 428-residue chain is tRNA(Ile)-lysidine synthase (428 aa).

28–33 (SGGVDS) serves as a coordination point for ATP.

The protein belongs to the tRNA(Ile)-lysidine synthase family.

It is found in the cytoplasm. The enzyme catalyses cytidine(34) in tRNA(Ile2) + L-lysine + ATP = lysidine(34) in tRNA(Ile2) + AMP + diphosphate + H(+). In terms of biological role, ligates lysine onto the cytidine present at position 34 of the AUA codon-specific tRNA(Ile) that contains the anticodon CAU, in an ATP-dependent manner. Cytidine is converted to lysidine, thus changing the amino acid specificity of the tRNA from methionine to isoleucine. This is tRNA(Ile)-lysidine synthase from Streptococcus pyogenes serotype M6 (strain ATCC BAA-946 / MGAS10394).